The sequence spans 70 residues: DNA-directed RNA polymerase subunit omega (70 aa).

Belongs to the RNA polymerase subunit omega family. In terms of assembly, the RNAP catalytic core consists of 2 alpha, 1 beta, 1 beta' and 1 omega subunit. When a sigma factor is associated with the core the holoenzyme is formed, which can initiate transcription.

The catalysed reaction is RNA(n) + a ribonucleoside 5'-triphosphate = RNA(n+1) + diphosphate. Promotes RNA polymerase assembly. Latches the N- and C-terminal regions of the beta' subunit thereby facilitating its interaction with the beta and alpha subunits. The protein is DNA-directed RNA polymerase subunit omega of Caldanaerobacter subterraneus subsp. tengcongensis (strain DSM 15242 / JCM 11007 / NBRC 100824 / MB4) (Thermoanaerobacter tengcongensis).